The chain runs to 123 residues: Venom protein 29 (123 aa).

The first 18 residues, methionine 1 to glycine 18, serve as a signal peptide directing secretion.

Contains 3 disulfide bonds. As to expression, expressed by the venom gland.

It localises to the secreted. In Lychas mucronatus (Chinese swimming scorpion), this protein is Venom protein 29.